A 406-amino-acid polypeptide reads, in one-letter code: Serine/threonine transporter SstT (406 aa).

The next 9 helical transmembrane spans lie at 15–35, 47–67, 81–101, 140–160, 191–211, 215–235, 289–309, 315–335, and 362–382; these read LVIQ…VSPS, FVGA…AASI, IIVM…VLSF, ALMS…GLAL, FGIF…ALAG, LLVV…PAMV, IPLG…TLTL, MGIE…AVSA, and IAMQ…SAET.

It belongs to the dicarboxylate/amino acid:cation symporter (DAACS) (TC 2.A.23) family.

It is found in the cell inner membrane. The catalysed reaction is L-serine(in) + Na(+)(in) = L-serine(out) + Na(+)(out). It catalyses the reaction L-threonine(in) + Na(+)(in) = L-threonine(out) + Na(+)(out). In terms of biological role, involved in the import of serine and threonine into the cell, with the concomitant import of sodium (symport system). This Vibrio vulnificus (strain YJ016) protein is Serine/threonine transporter SstT.